A 358-amino-acid chain; its full sequence is Mannonate dehydratase (358 aa).

Belongs to the mannonate dehydratase family. The cofactor is Fe(2+). Mn(2+) serves as cofactor.

The catalysed reaction is D-mannonate = 2-dehydro-3-deoxy-D-gluconate + H2O. Its pathway is carbohydrate metabolism; pentose and glucuronate interconversion. Catalyzes the dehydration of D-mannonate. This chain is Mannonate dehydratase, found in Lactococcus lactis subsp. cremoris (strain MG1363).